Reading from the N-terminus, the 420-residue chain is MGMTMSQKILADRAGLESVRPNDLIMAKLDMVLGNDITTPVAINAFKEAKFQKVFDKDKISLVMDHFAPNKDIKAATQSAQCRCFAKDFDISHYYDVGNMGVEHALLPEQGIVTIGDLIIGADSHTCTYGALGAFSTGVGSTDMAVGMATGQAWFKVPYAIKFNLKGKLRPYVSGKDVILHIIGKIGVDGALYKSMEFGGEGLKNLTIDDRLCIANMAIEAGAKNGIFEVDDITISYAKGRTKRDFRIYKADVDAEYEQVFDIDLDSINHTVAFPHLPENTKEKDDWGEIKIDQVVIGSCTNGRLSDMAVAAEILKDKTIAKNTRCIIIPATQNIYLECINRGYLETFIKAGAVVSTPTCGPCLGGHMGILAANEKCVSTTNRNFVGRMGHITSEVYLSSPEVAAASAVRGILSAPQDIA.

[4Fe-4S] cluster-binding residues include Cys300, Cys360, and Cys363.

It belongs to the aconitase/IPM isomerase family. LeuC type 2 subfamily. As to quaternary structure, heterodimer of LeuC and LeuD. The cofactor is [4Fe-4S] cluster.

The enzyme catalyses (2R,3S)-3-isopropylmalate = (2S)-2-isopropylmalate. The protein operates within amino-acid biosynthesis; L-leucine biosynthesis; L-leucine from 3-methyl-2-oxobutanoate: step 2/4. Its function is as follows. Catalyzes the isomerization between 2-isopropylmalate and 3-isopropylmalate, via the formation of 2-isopropylmaleate. This is 3-isopropylmalate dehydratase large subunit from Helicobacter hepaticus (strain ATCC 51449 / 3B1).